The following is a 225-amino-acid chain: uncharacterized protein (225 aa).

A signal peptide spans 1–22 (MLQHYSVSWKKGLAALCLLAVA). The 4Fe-4S ferredoxin-type domain occupies 161–190 (GNLTAAEEKKTGCLVCLDSCPVGIVSNATY).

This is an uncharacterized protein from Escherichia coli (strain K12).